Consider the following 807-residue polypeptide: MTDSPFLELWQSRAVSVREQLGLGDRPNDSYCYNSAKNSTVLQGVTFGGIPTVLLIDVSCFLFLILVFSIIRRRFWDYGRIALVSEADSEPRFQRLSSTSSSGQQDFENELGCCPWLTAIFRLHDDQILEWCGEDAIHYLSFQRHIIFLLVVVSFLSLCVILPVNLSGDLLDKDPYSFGRTTIANLQTDNDLLWLHTIFAVIYLFLTVGFMRHHTQSIKYKEENLVRRTLFITGLPRDARKETVESHFRDAYPTCEVVDVQLCYNVAKLIYLCKERKKTEKSLTYYTNLQVKTGQRTLINPKPCGQFCCCEVQGCEWEDAISYYTRMKDRLLERITEEERHVQDQPLGMAFVTFQEKSMATYILKDFNACKCQSLQCKGEPQPSSHSRELYTSKWTVTFAADPEDICWKNLSIQGLRWWLQWLGINFTLFLGLFFLTTPSIILSTMDKFNVTKPIHALNNPIISQFFPTLLLWSFSALLPSIVYYSTLLESHWTKSGENQIMMTKVYIFLIFMVLILPSLGLTSLDFFFRWLFDKTSSEASIRLECVFLPDQGAFFVNYVIASAFIGNGMELLRLPGLILYTFRMIMAKTAADRRNVKQNQAFQYEFGAMYAWMLCVFTVIMAYSITCPIIAPFGLIYILLKHMVDRHNLYFIYLPAKLEKGIHFAAVNQALAAPILCLFWLYFFSFLRLGMKAPATLFTFLVVLLTILVCLAHTCFGYFKHLSPLNYKTEEPASDKGSEAEAHMPPPFTPYVPRILNGLASERTALSPQQQQQQTYGAIHNISGTIPGQCLAQSATGSVAAAPQEA.

The Extracellular portion of the chain corresponds to 1–51 (MTDSPFLELWQSRAVSVREQLGLGDRPNDSYCYNSAKNSTVLQGVTFGGIP). N-linked (GlcNAc...) asparagine glycosylation is present at Asn38. Residues 52 to 74 (TVLLIDVSCFLFLILVFSIIRRR) form a helical membrane-spanning segment. The Cytoplasmic portion of the chain corresponds to 75-134 (FWDYGRIALVSEADSEPRFQRLSSTSSSGQQDFENELGCCPWLTAIFRLHDDQILEWCGE). The chain crosses the membrane as a helical span at residues 135–167 (DAIHYLSFQRHIIFLLVVVSFLSLCVILPVNLS). Topologically, residues 168 to 191 (GDLLDKDPYSFGRTTIANLQTDND) are extracellular. Residues 192–217 (LLWLHTIFAVIYLFLTVGFMRHHTQS) traverse the membrane as a helical segment. Residues 218-416 (IKYKEENLVR…CWKNLSIQGL (199 aa)) are Cytoplasmic-facing. The intracellular linker IL2; confers mechanosensitivity stretch occupies residues 219–414 (KYKEENLVRR…DICWKNLSIQ (196 aa)). The chain crosses the membrane as a helical span at residues 417-444 (RWWLQWLGINFTLFLGLFFLTTPSIILS). Residues 445-462 (TMDKFNVTKPIHALNNPI) lie on the Extracellular side of the membrane. Asn450 carries an N-linked (GlcNAc...) asparagine glycan. The helical transmembrane segment at 463–490 (ISQFFPTLLLWSFSALLPSIVYYSTLLE) threads the bilayer. At 491 to 495 (SHWTK) the chain is on the cytoplasmic side. A helical transmembrane segment spans residues 496–532 (SGENQIMMTKVYIFLIFMVLILPSLGLTSLDFFFRWL). The Extracellular segment spans residues 533 to 554 (FDKTSSEASIRLECVFLPDQGA). Residues 555–586 (FFVNYVIASAFIGNGMELLRLPGLILYTFRMI) traverse the membrane as a helical segment. Residues 555–586 (FFVNYVIASAFIGNGMELLRLPGLILYTFRMI) form a gating helix region. Topologically, residues 587–606 (MAKTAADRRNVKQNQAFQYE) are cytoplasmic. The chain crosses the membrane as a helical span at residues 607 to 624 (FGAMYAWMLCVFTVIMAY). At 625–628 (SITC) the chain is on the extracellular side. Residues 629 to 651 (PIIAPFGLIYILLKHMVDRHNLY) traverse the membrane as a helical segment. Residues 652–661 (FIYLPAKLEK) lie on the Cytoplasmic side of the membrane. Residues 662 to 689 (GIHFAAVNQALAAPILCLFWLYFFSFLR) traverse the membrane as a helical segment. Residues 690–694 (LGMKA) lie on the Extracellular side of the membrane. Residues 695 to 709 (PATLFTFLVVLLTIL) form a helical membrane-spanning segment. Over 710-807 (VCLAHTCFGY…GSVAAAPQEA (98 aa)) the chain is Cytoplasmic. Ser739 carries the phosphoserine modification.

Belongs to the CSC1 (TC 1.A.17) family. Monomer. N-Glycosylated.

The protein localises to the lysosome membrane. Its subcellular location is the early endosome membrane. It localises to the cell membrane. The enzyme catalyses Ca(2+)(in) = Ca(2+)(out). Its function is as follows. Mechanosensitive cation channel with low conductance and high activation threshold. In contrast to TMEM63B, does not show phospholipid scramblase activity. Acts as a regulator of lysosomal morphology by mediating lysosomal mechanosensitivity. Important for the baby's first breath and respiration throughout life. Upon lung inflation conducts cation currents in alveolar type 1 and 2 cells triggering lamellar body exocytosis and surfactant secretion into airspace. Also acts as an osmosensitive cation channel preferentially activated by hypotonic stress. The chain is Mechanosensitive cation channel TMEM63A (TMEM63A) from Pongo abelii (Sumatran orangutan).